Consider the following 188-residue polypeptide: Trafficking protein particle complex subunit 5 (188 aa).

A Phosphoserine modification is found at Ser-10.

It belongs to the TRAPP small subunits family. BET3 subfamily. In terms of assembly, component of the multisubunit TRAPP (transport protein particle) complex, which includes at least TRAPPC2, TRAPPC2L, TRAPPC3, TRAPPC3L, TRAPPC4, TRAPPC5, TRAPPC8, TRAPPC9, TRAPPC10, TRAPPC11 and TRAPPC12.

The protein localises to the golgi apparatus. Its subcellular location is the cis-Golgi network. It is found in the endoplasmic reticulum. May play a role in vesicular transport from endoplasmic reticulum to Golgi. The protein is Trafficking protein particle complex subunit 5 (Trappc5) of Mus musculus (Mouse).